Consider the following 139-residue polypeptide: Large ribosomal subunit protein uL16 (139 aa).

This sequence belongs to the universal ribosomal protein uL16 family. In terms of assembly, part of the 50S ribosomal subunit.

Functionally, binds 23S rRNA and is also seen to make contacts with the A and possibly P site tRNAs. This Treponema denticola (strain ATCC 35405 / DSM 14222 / CIP 103919 / JCM 8153 / KCTC 15104) protein is Large ribosomal subunit protein uL16.